Consider the following 417-residue polypeptide: Multifunctional CCA protein (417 aa).

Positions 8 and 11 each coordinate ATP. Residues G8 and R11 each contribute to the CTP site. Residues D21 and D23 each contribute to the Mg(2+) site. ATP is bound by residues R91, R137, and R140. CTP contacts are provided by R91, R137, and R140. Residues 225 to 326 (SGIHTLMTLQ…LNVLKKTDAF (102 aa)) enclose the HD domain.

It belongs to the tRNA nucleotidyltransferase/poly(A) polymerase family. Bacterial CCA-adding enzyme type 1 subfamily. As to quaternary structure, monomer. Can also form homodimers and oligomers. It depends on Mg(2+) as a cofactor. Ni(2+) is required as a cofactor.

It carries out the reaction a tRNA precursor + 2 CTP + ATP = a tRNA with a 3' CCA end + 3 diphosphate. The enzyme catalyses a tRNA with a 3' CCA end + 2 CTP + ATP = a tRNA with a 3' CCACCA end + 3 diphosphate. Its function is as follows. Catalyzes the addition and repair of the essential 3'-terminal CCA sequence in tRNAs without using a nucleic acid template. Adds these three nucleotides in the order of C, C, and A to the tRNA nucleotide-73, using CTP and ATP as substrates and producing inorganic pyrophosphate. tRNA 3'-terminal CCA addition is required both for tRNA processing and repair. Also involved in tRNA surveillance by mediating tandem CCA addition to generate a CCACCA at the 3' terminus of unstable tRNAs. While stable tRNAs receive only 3'-terminal CCA, unstable tRNAs are marked with CCACCA and rapidly degraded. This Neisseria meningitidis serogroup C (strain 053442) protein is Multifunctional CCA protein.